The sequence spans 270 residues: NAD(P)H-hydrate epimerase (270 aa).

In terms of domain architecture, YjeF N-terminal spans 25-234; it reads FQQLMDLMQN…DLLAPEEIYQ (210 aa). 73-77 contacts (6S)-NADPHX; sequence DNGGQ. Residues Asn-74 and Asp-144 each coordinate K(+). (6S)-NADPHX is bound by residues 148 to 154 and Glu-177; that span reads GVGLYGH. Thr-180 provides a ligand contact to K(+).

It belongs to the NnrE/AIBP family. Requires K(+) as cofactor.

It catalyses the reaction (6R)-NADHX = (6S)-NADHX. The catalysed reaction is (6R)-NADPHX = (6S)-NADPHX. In terms of biological role, catalyzes the epimerization of the S- and R-forms of NAD(P)HX, a damaged form of NAD(P)H that is a result of enzymatic or heat-dependent hydration. This is a prerequisite for the S-specific NAD(P)H-hydrate dehydratase to allow the repair of both epimers of NAD(P)HX. The protein is NAD(P)H-hydrate epimerase of Legionella pneumophila (strain Paris).